Here is a 733-residue protein sequence, read N- to C-terminus: Protein psiM (733 aa).

A signal peptide spans 1–26 (MKKINNNKIFVLFLTILLYLLNITTA). N-linked (GlcNAc...) asparagine glycosylation is found at Asn-22, Asn-65, and Asn-96. Residues 27–672 (QKPVSINIKI…VCQKAALVST (646 aa)) are Extracellular-facing. The region spanning 114–260 (NYDSDSGNYI…YDYCGVCNGD (147 aa)) is the PA14 domain. N-linked (GlcNAc...) asparagine glycosylation is found at Asn-277, Asn-336, Asn-379, Asn-428, Asn-471, Asn-537, Asn-573, and Asn-641. The chain crosses the membrane as a helical span at residues 673–693 (AVIASVVVVGAVVLGAAIFAG). Residues 694–733 (KKGYDAWKTSQGNVMAASQANPLYTQSSNGGENPLYNSPT) lie on the Cytoplasmic side of the membrane.

The protein belongs to the prespore-cell-inducing factor family.

The protein resides in the membrane. The chain is Protein psiM (psiM) from Dictyostelium discoideum (Social amoeba).